Reading from the N-terminus, the 417-residue chain is Blood group Rh(CE) polypeptide (417 aa).

A run of 11 helical transmembrane segments spans residues 12-32 (CLPLCALTLEAALILLFYFFT), 44-64 (LVASYQVGQDLTVMAALGLGF), 77-97 (VAFNLFMLALGVQWAILLDGF), 125-145 (ISAGAVLGKVNLAQLVVMVLV), 172-192 (FYVFAAYFGLTVAWCLPKPLP), 203-223 (TIPSLSAMLGALFLWMFWPSV), 238-258 (MFNTYYALAVSVVTAISGSSL), 265-285 (ISMTYVHSAVLAGGVAVGTSC), 287-307 (LIPSPWLAMVLGLVAGLISIG), 331-351 (IFSLLGLLGEITYIVLLVLHT), and 358-378 (MIGFQVLLSIGELSLAIVIAL).

It belongs to the ammonium transporter (TC 2.A.49) family. Rh subfamily. As to quaternary structure, heterotrimer; a RHCE monomer interacts with a RHAG homodimer. Component of the ankyrin-1 complex in the erythrocyte, composed of ANK1, RHCE, RHAG, SLC4A1, EPB42, GYPA, GYPB and AQP1. Interacts (via the N- and C-terminal) with ANK1 (via ANk 1-5 repeats); mediates the primary membrane attachment site for ANK1. As to expression, restricted to tissues or cell lines expressing erythroid characters. Isoform 4g and isoform RhPI-Alpha are expressed in immature erythroblasts but not in mature erythroblasts.

The protein resides in the membrane. Component of the ankyrin-1 complex, a multiprotein complex involved in the stability and shape of the erythrocyte membrane. Mediates the primary membrane attachment site for ANK1 when associated with RHAG. May participate in the ammonium and carbon dioxide transport through the heterotrimer form. The protein is Blood group Rh(CE) polypeptide of Homo sapiens (Human).